A 330-amino-acid chain; its full sequence is Fructose-1,6-bisphosphatase class 1 (330 aa).

Glu-84, Asp-103, Leu-105, and Asp-106 together coordinate Mg(2+). Residues 106–109 (DGSS), Asn-196, and Lys-262 contribute to the substrate site. Position 268 (Glu-268) interacts with Mg(2+).

Belongs to the FBPase class 1 family. As to quaternary structure, homotetramer. Mg(2+) serves as cofactor.

The protein localises to the cytoplasm. The catalysed reaction is beta-D-fructose 1,6-bisphosphate + H2O = beta-D-fructose 6-phosphate + phosphate. The protein operates within carbohydrate biosynthesis; gluconeogenesis. In Shewanella sp. (strain MR-7), this protein is Fructose-1,6-bisphosphatase class 1.